The sequence spans 936 residues: MPSRAASPALSENEFDITGALFQNDSDSDAETQKPTKRKKVPAAPNVNLDFLGEANAGDSDEDDEAFIAEKQTSANRKSANLKGRTVKKGGGFQAMGLNANLLKAIARKGFSVPTPIQRKTIPVIMEDQDVVGMARTGSGKTAAFVIPMIEKLKSHSTKFGARGLILSPSRELALQTLKVVKELGKGTDLKSVLLVGGDSLEEQFGMMAGNPDIVIATPGRFLHLKVEMNLDLSSIKYVVFDEADRLFEMGFAAQLTEILHGLPSTRQTLLFSATLPKSLVEFARAGLQDPTLVRLDTESKISPDLQNAFFSVKSAEKEGALLYILNEVIKMPTGPTEASLRLKEKGPEDSKNKKRKRAEMERAVNMKESPTKHSTIVFAATKHHVDYLYSLLREAGFAVSYVYGSLDQTARKIQVQNFRTGISNILVVTDVAARGIDIPILANVINYDFPSQPKIFVHRVGRTARAGRKGWSYSLVRDADAPYLLDLQLFLGRKLVLGRESDQVNFAEDVAVGSLPRDGLSQTCEWVSRVLDDDADIFAQRAVSTKGEKLYLRTRNAASAESAKRAKQVVTSDNWTAVHPLFQDEASNLEAEREKMLARIGGYRPQETIFEVQNRRGGKGGKASEPDEALDSIKRVRSTLEAKKKQRAQAEELEATTNTDGAEVDGDAFSDLEGDNANIPDNMSLASESDLEVTFSSYNTTDKASKSNSNSKSDSTPTTLFQNPEYFMSYTPANTSLAEDRAYGVHSGTNANFASATRNATMDLQADEGGKGFGEPRTLMRWDKRHKKYVSRQNDEDGSKGTKLVRGESGAKIAATFRSGRFDAWKKGKRVGRLPRVGEAETPGLAADLGGSGGSFGGKRFRHKSEKAPKAADPLRGDYEKMKKKAEAARERAASKVGGVTSGGKSEIRNTDDIRKARKLKQKRREKNARPSRKK.

Residues 1–48 (MPSRAASPALSENEFDITGALFQNDSDSDAETQKPTKRKKVPAAPNVN) are disordered. The short motif at 91-119 (GGFQAMGLNANLLKAIARKGFSVPTPIQR) is the Q motif element. Residues 122 to 294 (IPVIMEDQDV…RAGLQDPTLV (173 aa)) form the Helicase ATP-binding domain. 135-142 (ARTGSGKT) is a binding site for ATP. A DEAD box motif is present at residues 242–245 (DEAD). Disordered regions lie at residues 337 to 363 (TEASLRLKEKGPEDSKNKKRKRAEMER), 642 to 684 (EAKK…PDNM), 701 to 721 (TTDKASKSNSNSKSDSTPTTL), and 843 to 936 (TPGL…SRKK). Over residues 341-352 (LRLKEKGPEDSK) the composition is skewed to basic and acidic residues. One can recognise a Helicase C-terminal domain in the interval 360-511 (EMERAVNMKE…SDQVNFAEDV (152 aa)). Residues 663 to 675 (AEVDGDAFSDLEG) are compositionally biased toward acidic residues. The segment covering 701-717 (TTDKASKSNSNSKSDST) has biased composition (low complexity). Residues 867–895 (EKAPKAADPLRGDYEKMKKKAEAARERAA) show a composition bias toward basic and acidic residues. Residues 896 to 906 (SKVGGVTSGGK) are compositionally biased toward low complexity. Basic and acidic residues predominate over residues 907 to 916 (SEIRNTDDIR). Positions 917-936 (KARKLKQKRREKNARPSRKK) are enriched in basic residues.

It belongs to the DEAD box helicase family. DDX54/DBP10 subfamily.

The protein resides in the nucleus. It localises to the nucleolus. It carries out the reaction ATP + H2O = ADP + phosphate + H(+). ATP-binding RNA helicase involved in the biogenesis of 60S ribosomal subunits and is required for the normal formation of 25S and 5.8S rRNAs. This Emericella nidulans (strain FGSC A4 / ATCC 38163 / CBS 112.46 / NRRL 194 / M139) (Aspergillus nidulans) protein is ATP-dependent RNA helicase dbp10 (dbp10).